A 138-amino-acid chain; its full sequence is Large ribosomal subunit protein uL16 (138 aa).

The segment covering 1 to 13 (MLQPARRKYRKEQ) has biased composition (basic residues). Residues 1–21 (MLQPARRKYRKEQKGRNTGIA) are disordered.

It belongs to the universal ribosomal protein uL16 family. As to quaternary structure, part of the 50S ribosomal subunit.

Its function is as follows. Binds 23S rRNA and is also seen to make contacts with the A and possibly P site tRNAs. In Albidiferax ferrireducens (strain ATCC BAA-621 / DSM 15236 / T118) (Rhodoferax ferrireducens), this protein is Large ribosomal subunit protein uL16.